The following is a 78-amino-acid chain: MLILTRKAGESLHLGDDIRITVLGIQGKQVKIGIEVPGDMVVYREEVYRRVIEENRMALDISNADLLAATKIWHGRTK.

This sequence belongs to the CsrA/RsmA family. Homodimer; the beta-strands of each monomer intercalate to form a hydrophobic core, while the alpha-helices form wings that extend away from the core.

The protein resides in the cytoplasm. A translational regulator that binds mRNA to regulate translation initiation and/or mRNA stability. Usually binds in the 5'-UTR at or near the Shine-Dalgarno sequence preventing ribosome-binding, thus repressing translation. Its main target seems to be the major flagellin gene, while its function is anatagonized by FliW. The protein is Translational regulator CsrA of Nitratidesulfovibrio vulgaris (strain ATCC 29579 / DSM 644 / CCUG 34227 / NCIMB 8303 / VKM B-1760 / Hildenborough) (Desulfovibrio vulgaris).